The sequence spans 199 residues: Recombination protein RecR (199 aa).

Residues 56–71 (CQVCFHLSAESTCEIC) form a C4-type zinc finger. The region spanning 79-173 (QTLCVVADSR…KVTRIAFGLP (95 aa)) is the Toprim domain.

Belongs to the RecR family.

In terms of biological role, may play a role in DNA repair. It seems to be involved in an RecBC-independent recombinational process of DNA repair. It may act with RecF and RecO. This is Recombination protein RecR from Gloeothece citriformis (strain PCC 7424) (Cyanothece sp. (strain PCC 7424)).